The chain runs to 648 residues: Protein teflon (648 aa).

The segment at 33-56 (LYCHFCRDLFTQLPEFLRHLQGAH) adopts a C2H2-type 1 zinc-finger fold. Disordered stretches follow at residues 76-127 (SGEQ…GSQN) and 146-170 (EHIN…NSES). Positions 85-94 (VGHNSSSSDS) are enriched in polar residues. Positions 96–107 (GLAKSEDSRATE) are enriched in basic and acidic residues. The C2H2-type 2; degenerate zinc-finger motif lies at 598–620 (YFCKCCDDIFTLNEDYIRHLVSQ). The segment at 624–647 (YQCTKCIKTFKYQGHYDKHMRTVH) adopts a C2H2-type 3 zinc-finger fold.

It belongs to the Teflon family.

Its subcellular location is the nucleus. It is found in the chromosome. In terms of biological role, specifically required in males for proper segregation of autosomal bivalents at meiosis I. Expression is required in the male germ line prior to spermatocyte stage S4. May have a role as a bridging molecule maintaining adhesion to hold autosome bivalents together via heterochromatic connections. The polypeptide is Protein teflon (Drosophila yakuba (Fruit fly)).